Reading from the N-terminus, the 355-residue chain is Elongation factor Ts (355 aa).

The segment at 82-85 (TDFV) is involved in Mg(2+) ion dislocation from EF-Tu.

Belongs to the EF-Ts family.

The protein resides in the cytoplasm. Associates with the EF-Tu.GDP complex and induces the exchange of GDP to GTP. It remains bound to the aminoacyl-tRNA.EF-Tu.GTP complex up to the GTP hydrolysis stage on the ribosome. This chain is Elongation factor Ts (tsf), found in Helicobacter pylori (strain J99 / ATCC 700824) (Campylobacter pylori J99).